A 1074-amino-acid chain; its full sequence is ADAMTS-like protein 4 (1074 aa).

The first 24 residues, 1-24 (MENWTGRPWLYLLLLLSLPQLCLD), serve as a signal peptide directing secretion. Positions 48-93 (GPWVQWASCSQPCGVGVQRRSRTCQLPTVQLHPSLPLPPRPPRHPE) constitute a TSP type-1 1 domain. Residues 77 to 342 (QLHPSLPLPP…QHPGAWLPLL (266 aa)) form a disordered region. The span at 103-119 (RPQTSPETLPLYRTQSR) shows a compositional bias: polar residues. Positions 132–152 (LGREETQEIRAARRSRLRDPI) are enriched in basic and acidic residues. The span at 206 to 226 (ANGSPQTELPPTELSVHTPSP) shows a compositional bias: polar residues. Over residues 310–323 (GQQGQGPWGTGGTP) the composition is skewed to gly residues. Asn490 is a glycosylation site (N-linked (GlcNAc...) (complex) asparagine). 5 consecutive TSP type-1 domains span residues 723–782 (CPPY…QLRL), 783–842 (CGHW…GPCT), 845–909 (WFHS…GPCE), 910–969 (RTWR…QGQA), and 970–1026 (CQDR…QPCS). N-linked (GlcNAc...) asparagine glycosylation is present at Asn773. The region spanning 1029–1066 (PDDQCKDSSPHCPLVVQARLCVYPYYTATCCRSCAHVL) is the PLAC domain.

As to quaternary structure, interacts with CTSB. Interacts with FBN1. Post-translationally, N-glycosylated. Can be O-fucosylated by POFUT2 on a serine or a threonine residue found within the consensus sequence C1-X(2)-(S/T)-C2-G of the TSP type-1 repeat domains where C1 and C2 are the first and second cysteine residue of the repeat, respectively. Fucosylated repeats can then be further glycosylated by the addition of a beta-1,3-glucose residue by the glucosyltransferase, B3GALTL. Fucosylation mediates the efficient secretion of ADAMTS family members. Can also be C-glycosylated with one or two mannose molecules on tryptophan residues within the consensus sequence W-X-X-W of the TPRs. N- and C-glycosylations can also facilitate secretion. As to expression, expressed in colon, heart, leukocyte, liver, lung, skeletal muscle, spleen, testis and placenta. Weaker expression in bone marrow, brain tissue, kidney and pancreas. Expression studies in fetal tissues reveal strong expression in heart, kidney, liver, lung and skeletal muscle, but weaker expression in fetal brain and skin.

The protein resides in the secreted. Its subcellular location is the extracellular space. The protein localises to the extracellular matrix. Positive regulation of apoptosis. May facilitate FBN1 microfibril biogenesis. This chain is ADAMTS-like protein 4 (ADAMTSL4), found in Homo sapiens (Human).